The sequence spans 428 residues: Peptidase B (428 aa).

Residues Lys195 and Asp200 each coordinate Mn(2+). Lys207 is an active-site residue. Mn(2+) is bound by residues Asp218, Asp277, and Glu279. The active site involves Arg281.

Belongs to the peptidase M17 family. As to quaternary structure, homohexamer. Requires Mn(2+) as cofactor.

The protein resides in the cytoplasm. The enzyme catalyses Release of an N-terminal amino acid, Xaa, from a peptide or arylamide. Xaa is preferably Glu or Asp but may be other amino acids, including Leu, Met, His, Cys and Gln.. In terms of biological role, probably plays an important role in intracellular peptide degradation. This is Peptidase B from Klebsiella pneumoniae (strain 342).